Consider the following 760-residue polypeptide: Anti-sigma-I factor RsgI6 (760 aa).

The Cytoplasmic portion of the chain corresponds to 1–55 (MIVGKVLDMDEKTAIIMTDDFAFLNVVRTSEMAVGKKVKVLDSDIIKPKNSLRRY). The region spanning 2–49 (IVGKVLDMDEKTAIIMTDDFAFLNVVRTSEMAVGKKVKVLDSDIIKPK) is the RsgI N-terminal anti-sigma domain. The chain crosses the membrane as a helical span at residues 56–76 (LPVAAVAACFVIVLSFVLMFI). The Extracellular portion of the chain corresponds to 77-760 (NGNTARKNIY…GTLQTTYRIP (684 aa)). Residues 274 to 352 (AINTGPAESA…STPKPVSPVQ (79 aa)) are disordered. Over residues 291–352 (LPATSTPGRT…STPKPVSPVQ (62 aa)) the composition is skewed to polar residues. The 300-residue stretch at 402-701 (DSSNKPIENA…NEAGRRFESL (300 aa)) folds into the GH10 domain. Glutamate 538 serves as the catalytic Proton donor. Glutamate 635 acts as the Nucleophile in catalysis.

In the C-terminal section; belongs to the glycosyl hydrolase 10 (cellulase F) family. Interacts (via RsgI N-terminal anti-sigma domain) with SigI6.

Its subcellular location is the cell membrane. The enzyme catalyses Endohydrolysis of (1-&gt;4)-beta-D-xylosidic linkages in xylans.. Its pathway is glycan degradation; xylan degradation. In terms of biological role, anti-sigma factor for SigI6. Negatively regulates SigI6 activity through direct interaction. Binding of the polysaccharide substrate to the extracellular C-terminal sensing domain of RsgI6 may induce a conformational change in its N-terminal cytoplasmic region, leading to the release and activation of SigI6. Binds to and hydrolyzes insoluble and soluble xylan substrates. Has low enzymatic activity. The protein is Anti-sigma-I factor RsgI6 of Acetivibrio thermocellus (strain ATCC 27405 / DSM 1237 / JCM 9322 / NBRC 103400 / NCIMB 10682 / NRRL B-4536 / VPI 7372) (Clostridium thermocellum).